The sequence spans 160 residues: Cytochrome b6-f complex subunit 4 (160 aa).

3 helical membrane passes run 36-56 (LLYIFPVVILGTIACNVGLAV), 95-115 (LLGVLLMVSVPAGLLTVPFLE), and 131-151 (TVFLIGTAVALWLGIGATLPI).

It belongs to the cytochrome b family. PetD subfamily. The 4 large subunits of the cytochrome b6-f complex are cytochrome b6, subunit IV (17 kDa polypeptide, petD), cytochrome f and the Rieske protein, while the 4 small subunits are petG, petL, petM and petN. The complex functions as a dimer.

The protein localises to the plastid. Its subcellular location is the chloroplast thylakoid membrane. Its function is as follows. Component of the cytochrome b6-f complex, which mediates electron transfer between photosystem II (PSII) and photosystem I (PSI), cyclic electron flow around PSI, and state transitions. This Coffea arabica (Arabian coffee) protein is Cytochrome b6-f complex subunit 4.